The chain runs to 302 residues: Glutaminase (302 aa).

Substrate is bound by residues Ser61, Asn111, Glu155, Asn162, Tyr186, Tyr238, and Val256.

It belongs to the glutaminase family. In terms of assembly, homotetramer.

The enzyme catalyses L-glutamine + H2O = L-glutamate + NH4(+). In Pseudomonas fluorescens (strain ATCC BAA-477 / NRRL B-23932 / Pf-5), this protein is Glutaminase.